The chain runs to 276 residues: Aldo-keto reductase Mjls_1919 (276 aa).

Tyr50 acts as the Proton donor in catalysis. Residues Leu190, Ile228, Lys230, Ser231, Val232, Arg236, Ser239, and Asn240 each coordinate NADPH.

Belongs to the aldo/keto reductase family.

This Mycobacterium sp. (strain JLS) protein is Aldo-keto reductase Mjls_1919.